We begin with the raw amino-acid sequence, 874 residues long: AP-1 complex subunit gamma-1 (874 aa).

The GAE domain occupies 761-873 (TVAKSHTVYT…QDQTDWAQPS (113 aa)).

This sequence belongs to the adaptor complexes large subunit family. As to quaternary structure, adaptor protein complex 1 (AP-1) is a heterotetramer composed of two large adaptins (gamma-type subunit APL4 and beta-type subunit APL2), a medium adaptin (mu-type subunit APM1) and a small adaptin (sigma-type subunit APS1). AP-1 interacts with clathrin.

Its subcellular location is the cytoplasmic vesicle. The protein resides in the clathrin-coated vesicle membrane. It localises to the golgi apparatus. In terms of biological role, adaptins are components of the adaptor complexes which link clathrin to receptors in coated vesicles. Clathrin-associated protein complexes are believed to interact with the cytoplasmic tails of membrane proteins, leading to their selection and concentration. The AP-1 complex interacts directly with clathrin. Required for apical growth extension. The sequence is that of AP-1 complex subunit gamma-1 (APL4) from Mycosarcoma maydis (Corn smut fungus).